The sequence spans 84 residues: Cytochrome b559 subunit alpha (84 aa).

Over 2 to 20 (AGTTGERPFSDIITSVRYW) the chain is Cytoplasmic. A helical membrane pass occupies residues 21–35 (VIHSITIPALFIAGW). His-23 is a binding site for heme. The Lumenal portion of the chain corresponds to 36–84 (LFVSTGLAYDVFGTPRPDSYYAQEQRSIPLVTDRFEAKQQVETFLEQLK).

The protein belongs to the PsbE/PsbF family. As to quaternary structure, heterodimer of an alpha subunit and a beta subunit. PSII is composed of 1 copy each of membrane proteins PsbA, PsbB, PsbC, PsbD, PsbE, PsbF, PsbH, PsbI, PsbJ, PsbK, PsbL, PsbM, PsbT, PsbX, PsbY, PsbZ, Psb30/Ycf12, peripheral proteins PsbO, CyanoQ (PsbQ), PsbU, PsbV and a large number of cofactors. It forms dimeric complexes. Heme b serves as cofactor.

The protein localises to the cellular thylakoid membrane. Its function is as follows. This b-type cytochrome is tightly associated with the reaction center of photosystem II (PSII). PSII is a light-driven water:plastoquinone oxidoreductase that uses light energy to abstract electrons from H(2)O, generating O(2) and a proton gradient subsequently used for ATP formation. It consists of a core antenna complex that captures photons, and an electron transfer chain that converts photonic excitation into a charge separation. This is Cytochrome b559 subunit alpha from Thermostichus vulcanus (Synechococcus vulcanus).